We begin with the raw amino-acid sequence, 431 residues long: UPF0597 protein TDE_2144 (431 aa).

This sequence belongs to the UPF0597 family.

The polypeptide is UPF0597 protein TDE_2144 (Treponema denticola (strain ATCC 35405 / DSM 14222 / CIP 103919 / JCM 8153 / KCTC 15104)).